The following is a 505-amino-acid chain: MEEFQRHIELDRSWQHNFLYPLIFQEYIYAFAYDHGLNKSILLENSGNSKYSLLLVKRLITRMYQQNHLILSANDSNQNVILGHKHKKNLYSQMITEGFAVIVEVPFSLLLISSLGEKEIVKSHNLRSIHSIFPFLEDKLLHLNYVLDILITYPAHLEILVQTLRYWVKDASSLHLLRFFLYEYRNLNSLITPKELISFLKKRNQRLFLFLYNLHVCEYESLFVFLCNQSSYLRPTSFGALIERIYFCGKLKYLVKVFTKDFGVILWIFREPFPHYVRYQGKSILASKGTSLLMHKWKYYLIYFGQCHFSVWSQPKRLYINRLSNHSLDFMGFLSRVRLNSSVIRSQMLKNSFLIENISKKFDTVVPIIPLVGSLAKAKFCNVLGHPISKSVWTDLSDSDILDRFGRICRNISHYYSGSSRKKSLYRIKYILRLSCARTLSRKHKSTVRAFLKRLGSEFLEEFFTEEEKALSLILPRDSSISRGLYRGRIWYLDIICIHNLANDE.

It belongs to the intron maturase 2 family. MatK subfamily.

The protein localises to the plastid. It localises to the chloroplast. Functionally, usually encoded in the trnK tRNA gene intron. Probably assists in splicing its own and other chloroplast group II introns. In Spinacia oleracea (Spinach), this protein is Maturase K.